The sequence spans 595 residues: uncharacterized protein (595 aa).

An N-terminal signal peptide occupies residues 1–23; the sequence is MLSLSSPPWLLLLVLFFFANGSA. 11 N-linked (GlcNAc...) asparagine glycosylation sites follow: Asn31, Asn63, Asn88, Asn112, Asn144, Asn187, Asn205, Asn389, Asn480, Asn492, and Asn506. Residues 61-83 are compositionally biased toward polar residues; that stretch reads LENQTASSSNLNTNNEASDEQTG. 2 disordered regions span residues 61 to 119 and 141 to 164; these read LENQ…VSSL and TALN…TKGE. A compositionally biased stretch (low complexity) spans 84 to 119; the sequence is NSNSNTSSHSRNINGLPSSNSNIDNANSNSSSVSSL.

Its subcellular location is the secreted. This is an uncharacterized protein from Drosophila melanogaster (Fruit fly).